Reading from the N-terminus, the 221-residue chain is Esterase C25G4.2 (221 aa).

Active-site charge relay system residues include Ser106, Asp166, and His194.

This sequence belongs to the LovG family.

The protein is Esterase C25G4.2 of Caenorhabditis elegans.